The sequence spans 263 residues: Probable esterase PIR7A (263 aa).

Serine 82 functions as the Acyl-ester intermediate in the catalytic mechanism. Catalysis depends on charge relay system residues aspartate 213 and histidine 241.

It belongs to the AB hydrolase superfamily.

This chain is Probable esterase PIR7A (PIR7A), found in Oryza sativa subsp. indica (Rice).